Consider the following 279-residue polypeptide: Movement protein (279 aa).

Belongs to the cucumovirus movement protein family.

The protein localises to the host cell junction. Its subcellular location is the host plasmodesma. In terms of biological role, transports viral genome to neighboring plant cells directly through plasmosdesmata, without any budding. The movement protein allows efficient cell to cell propagation, by bypassing the host cell wall barrier. Acts by forming a tubular structure at the host plasmodesmata, enlarging it enough to allow free passage of virion capsids. The sequence is that of Movement protein from Cucumber mosaic virus (strain M) (CMV).